The chain runs to 139 residues: Putative pre-16S rRNA nuclease (139 aa).

The protein belongs to the YqgF nuclease family.

Its subcellular location is the cytoplasm. In terms of biological role, could be a nuclease involved in processing of the 5'-end of pre-16S rRNA. The protein is Putative pre-16S rRNA nuclease of Dictyoglomus thermophilum (strain ATCC 35947 / DSM 3960 / H-6-12).